The sequence spans 673 residues: MALARANSPQEALLWALNDLEENSFKTLKFHLRDVTQFHLARGELESLSQVDLASKLISMYGAQEAVRVVSRSLLAMNLMELVDYLNQVCLNDYREIYREHVRCLEERQDWGVNSSHNKLLLMATSSSGGRRSPSCSDLEQELDPVDVETLFAPEAESYSTPPIVVMQGSAGTGKTTLVKKLVQDWSKGKLYPGQFDYVFYVSCREVVLLPKCDLPNLICWCCGDDQAPVTEILRQPGRLLFILDGYDELQKSSRAECVLHILMRRREVPCSLLITTRPPALQSLEPMLGERRHVLVLGFSEEERETYFSSCFTDKEQLKNALEFVQNNAVLYKACQVPGICWVVCSWLKKKMARGQEVSETPSNSTDIFTAYVSTFLPTDGNGDSSELTRHKVLKSLCSLAAEGMRHQRLLFEEEVLRKHGLDGPSLTAFLNCIDYRAGLGIKKFYSFRHISFQEFFYAMSFLVKEDQSQQGEATHKEVAKLVDPENHEEVTLSLQFLFDMLKTEGTLSLGLKFCFRIAPSVRQDLKHFKEQIEAIKYKRSWDLEFSLYDSKIKKLTQGIQMKDVILNVQHLDEKKSDKKKSVSVTSSFSSGKVQSPFLGNDKSTRKQKKASNGKSRGAEEPAPGVRNRRLASREKGHMEMNDKEDGGVEEQEDEEGQTLKKDGEMIDKMNG.

Residues 1–92 (MALARANSPQ…VDYLNQVCLN (92 aa)) enclose the Pyrin domain. The 307-residue stretch at 163–469 (PIVVMQGSAG…AMSFLVKEDQ (307 aa)) folds into the NACHT domain. An ATP-binding site is contributed by 169–176 (GSAGTGKT). The interval 578-673 (SDKKKSVSVT…DGEMIDKMNG (96 aa)) is disordered. Positions 584-597 (VSVTSSFSSGKVQS) are enriched in low complexity. Residues 633-648 (ASREKGHMEMNDKEDG) are compositionally biased toward basic and acidic residues. Residues 649 to 658 (GVEEQEDEEG) are compositionally biased toward acidic residues. The span at 659–673 (QTLKKDGEMIDKMNG) shows a compositional bias: basic and acidic residues.

The protein belongs to the NLRP family. Oligomerizes. Interacts with PYCARD. Also interacts with CASP1 and IL1B. Interacts with NOD1 and components of the NOD1 signaling pathway including RIPK2, NR2C2/TAK1 and IKBKG/NEMO. Expressed in skin, tongue, heart, colon and several cell lines of hematopoietic and myocytic origin but not in kidney, skeletal muscle, spleen, liver, lung, thymus, brain or small intestine (at protein level).

Its subcellular location is the cytoplasm. The protein resides in the cell membrane. Inhibits autoprocessing of CASP1, CASP1-dependent IL1B secretion, PYCARD aggregation and PYCARD-mediated apoptosis but not apoptosis induced by FAS or BID. Displays anti-inflammatory activity. Required for immunity against C.albicans infection. Involved in the innate immune response by contributing to pro-inflammatory cytokine release in response to invasive bacterial infection. Contributes to T-cell-mediated inflammatory responses in the skin. Plays a role in protection against periodontitis through its involvement in induction of IL1A via ERK activation in oral epithelial cells infected with periodontal pathogens. Exhibits both ATPase and GTPase activities. The sequence is that of NACHT, LRR and PYD domains-containing protein 10 (Nlrp10) from Mus musculus (Mouse).